Reading from the N-terminus, the 296-residue chain is 33 kDa chaperonin (296 aa).

2 cysteine pairs are disulfide-bonded: Cys238–Cys240 and Cys271–Cys274.

This sequence belongs to the HSP33 family. Under oxidizing conditions two disulfide bonds are formed involving the reactive cysteines. Under reducing conditions zinc is bound to the reactive cysteines and the protein is inactive.

It is found in the cytoplasm. Functionally, redox regulated molecular chaperone. Protects both thermally unfolding and oxidatively damaged proteins from irreversible aggregation. Plays an important role in the bacterial defense system toward oxidative stress. This is 33 kDa chaperonin from Clostridium botulinum (strain ATCC 19397 / Type A).